A 141-amino-acid chain; its full sequence is uncharacterized protein (141 aa).

Basic and acidic residues predominate over residues 1–17 (MNKSESENDSEYHKEYS). Positions 1-24 (MNKSESENDSEYHKEYSESSDPED) are disordered. A coiled-coil region spans residues 52-115 (IQNLNNNVKE…QMLFEKMRDM (64 aa)).

This is an uncharacterized protein from Acanthamoeba polyphaga (Amoeba).